A 212-amino-acid chain; its full sequence is Adenylate kinase (212 aa).

10–15 (GAGKGT) lines the ATP pocket. The tract at residues 30–59 (AIGDIFRTIIKTSTSEAELINNYVRQGELI) is NMP. AMP is bound by residues arginine 36, 57-59 (ELI), 85-88 (GYPR), and glutamine 92. Positions 122–160 (GRYSCKNCGKIYNRYFLQPKTDNVCDVCGSSTFDYRKDD) are LID. Position 123 (arginine 123) interacts with ATP. Zn(2+)-binding residues include cysteine 126 and cysteine 129. 132–133 (IY) is an ATP binding site. Positions 146 and 149 each coordinate Zn(2+). AMP contacts are provided by arginine 157 and arginine 168. Lysine 196 contacts ATP.

This sequence belongs to the adenylate kinase family. In terms of assembly, monomer.

It is found in the cytoplasm. The enzyme catalyses AMP + ATP = 2 ADP. Its pathway is purine metabolism; AMP biosynthesis via salvage pathway; AMP from ADP: step 1/1. Functionally, catalyzes the reversible transfer of the terminal phosphate group between ATP and AMP. Plays an important role in cellular energy homeostasis and in adenine nucleotide metabolism. This is Adenylate kinase from Rickettsia peacockii (strain Rustic).